Consider the following 420-residue polypeptide: D-tagatose-1,6-bisphosphate aldolase subunit GatZ (420 aa).

Belongs to the GatZ/KbaZ family. GatZ subfamily. As to quaternary structure, forms a complex with GatY.

It functions in the pathway carbohydrate metabolism; D-tagatose 6-phosphate degradation; D-glyceraldehyde 3-phosphate and glycerone phosphate from D-tagatose 6-phosphate: step 2/2. Functionally, component of the tagatose-1,6-bisphosphate aldolase GatYZ that is required for full activity and stability of the Y subunit. Could have a chaperone-like function for the proper and stable folding of GatY. When expressed alone, GatZ does not show any aldolase activity. Is involved in the catabolism of galactitol. The polypeptide is D-tagatose-1,6-bisphosphate aldolase subunit GatZ (Escherichia coli O45:K1 (strain S88 / ExPEC)).